The sequence spans 865 residues: Leucine-rich repeat-containing protein 66 (865 aa).

Residues 4-24 (FYARVTVMVTGLCFVGTVTNP) traverse the membrane as a helical segment. Residue N42 is glycosylated (N-linked (GlcNAc...) asparagine). LRR repeat units lie at residues 138–160 (RLKV…WKLK), 161–182 (PLCS…GFHG), 185–206 (QLKS…AFKG), 209–230 (KLQV…VTIA), and 235–255 (NLEL…ANFQ). N248 is a glycosylation site (N-linked (GlcNAc...) asparagine). The chain crosses the membrane as a helical span at residues 366-386 (ALAVCLSVFITFVVAFCLGAF). Disordered stretches follow at residues 463–522 (RMLG…PGQH) and 654–749 (DTPS…AESV). Over residues 470–479 (MDPSSQQSPG) the composition is skewed to polar residues. The segment covering 675–688 (AVQRDASFDPHDDL) has biased composition (basic and acidic residues). Over residues 702 to 713 (FTLSSEGSQDTR) the composition is skewed to polar residues. S714 and S748 each carry phosphoserine. One can recognise an LRRNT domain in the interval 728 to 759 (SQPLPSRNLGEYKDSVTSAESVEDITSQQTLE). N-linked (GlcNAc...) asparagine glycosylation is present at N787. Residues 840-865 (FPNIDSSPSPPCSDQDPSDPEEHDTK) are disordered. Positions 855–865 (DPSDPEEHDTK) are enriched in acidic residues.

The protein localises to the membrane. The protein is Leucine-rich repeat-containing protein 66 (Lrrc66) of Rattus norvegicus (Rat).